We begin with the raw amino-acid sequence, 478 residues long: Probable sodium/glutamine symporter GlnT (478 aa).

10 helical membrane passes run 14-34 (DLLW…YFTF), 85-105 (IAIA…IIAI), 145-165 (WMGA…FNSV), 185-205 (LGLI…KRIA), 211-231 (IVVV…FSNI), 236-256 (GVLA…GGAL), 298-318 (AFGV…IILF), 342-362 (GSWA…CALI), 381-401 (LIFV…VAKV), and 411-431 (FMGL…KVVF).

Belongs to the alanine or glycine:cation symporter (AGCS) (TC 2.A.25) family.

Its subcellular location is the cell membrane. Probably functions as a sodium/glutamine symporter for glutamine uptake. The chain is Probable sodium/glutamine symporter GlnT (glnT) from Bacillus subtilis (strain 168).